Here is a 380-residue protein sequence, read N- to C-terminus: Cytochrome b (380 aa).

4 helical membrane-spanning segments follow: residues 33–53 (FGSL…FLAM), 77–98 (WLIR…YLHI), 113–133 (WNVG…GYVL), and 178–198 (FFAF…IHLI). Heme b is bound by residues His83 and His97. His182 and His196 together coordinate heme b. Residue His201 coordinates a ubiquinone. Helical transmembrane passes span 226–246 (YKDL…ALFS), 288–308 (LGGV…PILH), 320–340 (FSQF…WIGG), and 347–367 (FVII…VMIP).

It belongs to the cytochrome b family. In terms of assembly, the cytochrome bc1 complex contains 3 respiratory subunits (MT-CYB, CYC1 and UQCRFS1), 2 core proteins (UQCRC1 and UQCRC2) and probably 6 low-molecular weight proteins. Requires heme b as cofactor.

The protein localises to the mitochondrion inner membrane. Functionally, component of the ubiquinol-cytochrome c reductase complex (complex III or cytochrome b-c1 complex) that is part of the mitochondrial respiratory chain. The b-c1 complex mediates electron transfer from ubiquinol to cytochrome c. Contributes to the generation of a proton gradient across the mitochondrial membrane that is then used for ATP synthesis. In Paralichthys olivaceus (Bastard halibut), this protein is Cytochrome b (mt-cyb).